A 1571-amino-acid polypeptide reads, in one-letter code: MAEPTKISILGRESIVAEYGIWGTYIVQDLLTNLPSTTYVLVTDTNLGSIYREKFAKVFNEAAAALSPAPRLLTKEIPPGENSKSRQGKADIEDWMLQQTCGRDTVIIALGGGVIGDLLGFVASTYMRGIRFVQVPTTLLAMVDSSIGGKTAIDTPLGKNLIGAIWQPHRIYIDIDFIDTLPEREFINGMAEVIKTAAISDEKEFAALEQHADAILKAARSKAGKGRFDSVRQVLKDRIVASARHKAYVVTADEREGGLRNLLNLGHSIGHAIEAILSPQVLHGECVAIGMVKELELARYLGILKPIAVSRMVKCLSKYGLPTSLKDARVRKHTAGKHCSLEQLMANMALDKKNDGPKKKVVLLSAIGKTYEPKASVVSNEDIRVVLAPSIEVIPGVPKNLNVVCAPPGSKSISNRALVLAALGSGTVRVKNLLHSDDTEVMLNALERLGAATFAWEDEGEVLVVNGNGGKMQASPTELYLGNAGTASRFLTSVATLSGKGSVDYNILTGNNRMKQRPIGDLVDALTVNGAQVEYLEKAGSLPLKIAASGGFKGGRINLAAKVSSQYVSSLLMCAPYAKEPVTLKLVGGKPISLSYIEMTTAMMRSFGIDVQKSTTEEWTYHIPQGSYTNPPEYVIESDASSATYPLAIAAVTGTTCTVPNIGSASLQGDARFAVEVLRPMGCNVEQTATSTTVTGPADGVLRPLPNVDMEPMTDAFLGASVLAAIAQGKGGNNTTRIYGIANQRVKECNRIEAMRVELAKFGVVCREHPDGLEIDGINRSSLRHPAGGVFCYDDHRVAFSFSILSLVAPTSTLILEKECVGKTWPTYWDALKQKFGVQLEGKELAESEVTHGSADRSNASIIIIGMRGAGKTTTGRWAAKALNRKFIDLDVELEQTEGKTIPDLIKERGWQGFRDAELSLFKRALAERPTGHVFACGGGIVEIAEARKILVDYHKNKGNVLLVMRDIKKVMEFLNIDKTRPAYIEDMMSVWLRRQPWYQECSNVQYYSRHSSSPELALAMDDFGRFIQFVSGQTDYLAAIRKKHLSFFVSLTLPDLRESGDLLRTVASGSDAVELRVDLLKDPSSDSVIPSAEYVAEQISFYRSRVSLPIVFTIRTVSQGGKFPDDAHDAALELIMLAIRSGCEFIDLEITFPEDLLRKVTESKAHAKIIASHHDPRGKLNWANGSWIQYYNKALQYGDIIKLVGVAETLKDNTSLKDFKDWAEQAHPDVPVIAINMGDKGQLSRMLNGFLTPVSHPALPFKAAPGQLSAAEIRRGLSIMGEIPAKKFAVLGKPVSASRSPPMHNTLFEQNGLPHVYTRLETDKAQDVKEFIRSPDFGGASVTIPLKLDIIPLIDEILNEAEIIGAVNTIIPVEGKDGSTRLVGRNTDWSGIVRCLREAGAHSNEGKSSALVIGGGGTARAAIYALHHMGFSTIYVLGRSPEKIQNMASTFPTGFDIRVLEHANDVESIPRVAVGTIPGDKPIESNIREILCTIFQRSGSAGDESGVLLEMAYKPSVTPLIQLASDYGWTTIPGLEALVGQGVYQFEYWTGITPVYEVARNAVLGTNETK.

A 3-dehydroquinate synthase region spans residues 1–380 (MAEPTKISIL…YEPKASVVSN (380 aa)). NAD(+) contacts are provided by residues 44–46 (DTN), 81–84 (ENSK), 112–114 (GGV), and aspartate 117. Position 128 (arginine 128) interacts with 7-phospho-2-dehydro-3-deoxy-D-arabino-heptonate. 137 to 138 (TT) provides a ligand contact to NAD(+). 7-phospho-2-dehydro-3-deoxy-D-arabino-heptonate contacts are provided by aspartate 144 and lysine 150. Lysine 159 serves as a coordination point for NAD(+). Asparagine 160 lines the 7-phospho-2-dehydro-3-deoxy-D-arabino-heptonate pocket. Residues 177–180 (FIDT) and asparagine 188 contribute to the NAD(+) site. Zn(2+) is bound at residue glutamate 192. 7-phospho-2-dehydro-3-deoxy-D-arabino-heptonate is bound by residues 192-195 (EVIK) and lysine 246. The active-site Proton acceptor; for 3-dehydroquinate synthase activity is glutamate 256. Residues 260-264 (RNLLN) and histidine 267 contribute to the 7-phospho-2-dehydro-3-deoxy-D-arabino-heptonate site. Histidine 267 is a Zn(2+) binding site. Histidine 271 (proton acceptor; for 3-dehydroquinate synthase activity) is an active-site residue. The 7-phospho-2-dehydro-3-deoxy-D-arabino-heptonate site is built by histidine 283 and lysine 352. Histidine 283 lines the Zn(2+) pocket. An EPSP synthase region spans residues 393–838 (VIPGVPKNLN…WDALKQKFGV (446 aa)). Cysteine 820 serves as the catalytic For EPSP synthase activity. The tract at residues 859-1051 (NASIIIIGMR…RKKHLSFFVS (193 aa)) is shikimate kinase. 866–873 (GMRGAGKT) is an ATP binding site. The tract at residues 1052–1273 (LTLPDLRESG…AAPGQLSAAE (222 aa)) is 3-dehydroquinase. Catalysis depends on histidine 1175, which acts as the Proton acceptor; for 3-dehydroquinate dehydratase activity. Lysine 1203 acts as the Schiff-base intermediate with substrate; for 3-dehydroquinate dehydratase activity in catalysis. Positions 1286–1571 (AKKFAVLGKP…NAVLGTNETK (286 aa)) are shikimate dehydrogenase.

In the N-terminal section; belongs to the sugar phosphate cyclases superfamily. Dehydroquinate synthase family. The protein in the 2nd section; belongs to the EPSP synthase family. This sequence in the 3rd section; belongs to the shikimate kinase family. It in the 4th section; belongs to the type-I 3-dehydroquinase family. In the C-terminal section; belongs to the shikimate dehydrogenase family. In terms of assembly, homodimer. Requires Zn(2+) as cofactor.

Its subcellular location is the cytoplasm. It catalyses the reaction 7-phospho-2-dehydro-3-deoxy-D-arabino-heptonate = 3-dehydroquinate + phosphate. It carries out the reaction 3-dehydroquinate = 3-dehydroshikimate + H2O. The catalysed reaction is shikimate + NADP(+) = 3-dehydroshikimate + NADPH + H(+). The enzyme catalyses shikimate + ATP = 3-phosphoshikimate + ADP + H(+). It catalyses the reaction 3-phosphoshikimate + phosphoenolpyruvate = 5-O-(1-carboxyvinyl)-3-phosphoshikimate + phosphate. The protein operates within metabolic intermediate biosynthesis; chorismate biosynthesis; chorismate from D-erythrose 4-phosphate and phosphoenolpyruvate: step 2/7. It participates in metabolic intermediate biosynthesis; chorismate biosynthesis; chorismate from D-erythrose 4-phosphate and phosphoenolpyruvate: step 3/7. Its pathway is metabolic intermediate biosynthesis; chorismate biosynthesis; chorismate from D-erythrose 4-phosphate and phosphoenolpyruvate: step 4/7. It functions in the pathway metabolic intermediate biosynthesis; chorismate biosynthesis; chorismate from D-erythrose 4-phosphate and phosphoenolpyruvate: step 5/7. The protein operates within metabolic intermediate biosynthesis; chorismate biosynthesis; chorismate from D-erythrose 4-phosphate and phosphoenolpyruvate: step 6/7. Functionally, the AROM polypeptide catalyzes 5 consecutive enzymatic reactions in prechorismate polyaromatic amino acid biosynthesis. In Talaromyces marneffei (strain ATCC 18224 / CBS 334.59 / QM 7333) (Penicillium marneffei), this protein is Pentafunctional AROM polypeptide 2.